Reading from the N-terminus, the 142-residue chain is MKTFVAKPETVKRDWYVVDAEGKTLGRLASEIASRLRGKHKAEYTPHVDTGDYIIVINAEKVTVTGNKAAAKTYYRHTEFPGGIKSITFDKLIVRKPEMVIELAVKGMLPRGPLGRAMYRKLKVYAGAEHNHVAQQPKVLDI.

The protein belongs to the universal ribosomal protein uL13 family. Part of the 50S ribosomal subunit.

Functionally, this protein is one of the early assembly proteins of the 50S ribosomal subunit, although it is not seen to bind rRNA by itself. It is important during the early stages of 50S assembly. The protein is Large ribosomal subunit protein uL13 of Vibrio vulnificus (strain CMCP6).